Consider the following 204-residue polypeptide: ATP-dependent Clp protease proteolytic subunit 1 (204 aa).

The Nucleophile role is filled by S97. H122 is a catalytic residue.

This sequence belongs to the peptidase S14 family. Fourteen ClpP subunits assemble into 2 heptameric rings which stack back to back to give a disk-like structure with a central cavity, resembling the structure of eukaryotic proteasomes.

The protein resides in the cytoplasm. It catalyses the reaction Hydrolysis of proteins to small peptides in the presence of ATP and magnesium. alpha-casein is the usual test substrate. In the absence of ATP, only oligopeptides shorter than five residues are hydrolyzed (such as succinyl-Leu-Tyr-|-NHMec, and Leu-Tyr-Leu-|-Tyr-Trp, in which cleavage of the -Tyr-|-Leu- and -Tyr-|-Trp bonds also occurs).. Functionally, cleaves peptides in various proteins in a process that requires ATP hydrolysis. Has a chymotrypsin-like activity. Plays a major role in the degradation of misfolded proteins. The polypeptide is ATP-dependent Clp protease proteolytic subunit 1 (Trichormus variabilis (strain ATCC 29413 / PCC 7937) (Anabaena variabilis)).